Here is a 627-residue protein sequence, read N- to C-terminus: 1-deoxy-D-xylulose-5-phosphate synthase (627 aa).

Thiamine diphosphate contacts are provided by residues His87 and 128–130 (GHS). Asp159 is a Mg(2+) binding site. Residues 160-161 (GA), Asn188, Phe295, and Glu375 contribute to the thiamine diphosphate site. Asn188 is a Mg(2+) binding site.

This sequence belongs to the transketolase family. DXPS subfamily. In terms of assembly, homodimer. Requires Mg(2+) as cofactor. Thiamine diphosphate serves as cofactor.

The catalysed reaction is D-glyceraldehyde 3-phosphate + pyruvate + H(+) = 1-deoxy-D-xylulose 5-phosphate + CO2. Its pathway is metabolic intermediate biosynthesis; 1-deoxy-D-xylulose 5-phosphate biosynthesis; 1-deoxy-D-xylulose 5-phosphate from D-glyceraldehyde 3-phosphate and pyruvate: step 1/1. Functionally, catalyzes the acyloin condensation reaction between C atoms 2 and 3 of pyruvate and glyceraldehyde 3-phosphate to yield 1-deoxy-D-xylulose-5-phosphate (DXP). The protein is 1-deoxy-D-xylulose-5-phosphate synthase of Pseudomonas aeruginosa (strain LESB58).